The following is a 258-amino-acid chain: L-rhamnose-1-dehydrogenase (258 aa).

Isoleucine 19, aspartate 68, and asparagine 95 together coordinate NADP(+). Active-site proton donor residues include serine 147 and tyrosine 161. NADP(+) is bound by residues tyrosine 161, lysine 165, isoleucine 194, and threonine 196. Lysine 165 serves as the catalytic Lowers pKa of active site Tyr.

Belongs to the short-chain dehydrogenases/reductases (SDR) family.

It carries out the reaction L-rhamnofuranose + NAD(+) = L-rhamnono-1,4-lactone + NADH + H(+). NAD-dependent dehydrogenase that has high activity with L-rhamnose and L-lyxose, and shows only low activity with L-mannose. Has no activity with NADP. Catalyzes the first step in an alternative pathway for rhamnose utilization that does not involve phosphorylated intermediates. The polypeptide is L-rhamnose-1-dehydrogenase (DHG2) (Scheffersomyces stipitis (strain ATCC 58785 / CBS 6054 / NBRC 10063 / NRRL Y-11545) (Yeast)).